Consider the following 414-residue polypeptide: Serine hydroxymethyltransferase (414 aa).

Residues leucine 121 and 125–127 (GHL) contribute to the (6S)-5,6,7,8-tetrahydrofolate site. Lysine 229 carries the post-translational modification N6-(pyridoxal phosphate)lysine.

This sequence belongs to the SHMT family. In terms of assembly, homodimer. Pyridoxal 5'-phosphate is required as a cofactor.

Its subcellular location is the cytoplasm. It catalyses the reaction (6R)-5,10-methylene-5,6,7,8-tetrahydrofolate + glycine + H2O = (6S)-5,6,7,8-tetrahydrofolate + L-serine. It functions in the pathway one-carbon metabolism; tetrahydrofolate interconversion. It participates in amino-acid biosynthesis; glycine biosynthesis; glycine from L-serine: step 1/1. Functionally, catalyzes the reversible interconversion of serine and glycine with tetrahydrofolate (THF) serving as the one-carbon carrier. This reaction serves as the major source of one-carbon groups required for the biosynthesis of purines, thymidylate, methionine, and other important biomolecules. Also exhibits THF-independent aldolase activity toward beta-hydroxyamino acids, producing glycine and aldehydes, via a retro-aldol mechanism. The sequence is that of Serine hydroxymethyltransferase from Polaromonas sp. (strain JS666 / ATCC BAA-500).